The following is a 902-amino-acid chain: Cysteine-tryptophan domain-containing zinc finger protein 3 (902 aa).

A CW-type zinc finger spans residues 21-74; that stretch reads VLIEDNWVCCDMCHKWRLLPYGTNTSMLPKKWICSMLDWLPGMNKCDISEDETT. Zn(2+) contacts are provided by cysteine 30, cysteine 33, cysteine 54, and cysteine 66. Disordered regions lie at residues 131–233, 326–345, 420–480, and 537–651; these read EHDQ…EDRH, EDNRLSSMDHTSKGGDNENL, QSST…LNAD, and HGPT…SASP. 2 stretches are compositionally biased toward basic and acidic residues: residues 151–169 and 193–203; these read KNREVVDSEHYTNDRDPVS and SHSDGGDLTEK. The segment covering 204–213 has biased composition (basic residues); that stretch reads SKKHSKSKNR. Basic and acidic residues-rich tracts occupy residues 214-233 and 335-345; these read RGIDRDEHKTSKKTKKEDRH and HTSKGGDNENL. Residues 421 to 433 are compositionally biased toward low complexity; that stretch reads SSTVATSSSSKVS. 3 stretches are compositionally biased toward polar residues: residues 450–463, 564–588, and 599–611; these read ESVSSSPLKNSNTD, NSAPSRQGRNGSSNLISEGNKQIEM, and IDNQDMQKSIGQD. Basic and acidic residues predominate over residues 612–625; sequence NHSHMKEGKSEVHT. Over residues 634–648 the composition is skewed to polar residues; it reads KNHTQLRSNVENGDS.

Expressed in leaf sheaths, flag leaves, nodes, internodes and panicles.

The protein resides in the nucleus. In terms of biological role, binds to histones H3K4me1, H3K4me2 and H3K4me3 in GST pull-down assay. May facilitate the recruitment of effectors to mediate gene expression. This is Cysteine-tryptophan domain-containing zinc finger protein 3 from Oryza sativa subsp. japonica (Rice).